Reading from the N-terminus, the 302-residue chain is Cobalt-precorrin-6A reductase (302 aa).

Over residues 1–10 (MQTPEIKEGT) the composition is skewed to basic and acidic residues. A disordered region spans residues 1–37 (MQTPEIKEGTEQYLWRRKTMNPGDKGVKRKGSDRQRE).

The protein belongs to the precorrin-6x reductase family.

It catalyses the reaction Co-precorrin-6B + NAD(+) = Co-precorrin-6A + NADH + H(+). It functions in the pathway cofactor biosynthesis; adenosylcobalamin biosynthesis; cob(II)yrinate a,c-diamide from sirohydrochlorin (anaerobic route): step 7/10. Functionally, catalyzes the reduction of the macrocycle of cobalt-precorrin-6A to cobalt-precorrin-6B. This chain is Cobalt-precorrin-6A reductase (cbiJ), found in Methanothermobacter thermautotrophicus (strain ATCC 29096 / DSM 1053 / JCM 10044 / NBRC 100330 / Delta H) (Methanobacterium thermoautotrophicum).